The primary structure comprises 267 residues: Coiled-coil domain-containing protein 90B, mitochondrial (267 aa).

Residues 1–47 constitute a mitochondrion transit peptide; it reads MKGSQLYRHLSLQGNRLHLHLFQGKKLQLHPSQGHKGTAHRTWKKGF. Residues 142–175 are a coiled coil; that stretch reads LEKSEFATLRAENEKMKIELEHVRQHLLNETNRI. A helical membrane pass occupies residues 244-266; it reads TVRYMAASVFTCLAIALGFYRLW.

This sequence belongs to the CCDC90 family.

Its subcellular location is the mitochondrion membrane. The protein is Coiled-coil domain-containing protein 90B, mitochondrial (ccdc90b) of Xenopus tropicalis (Western clawed frog).